A 542-amino-acid chain; its full sequence is Putative serine/threonine-protein kinase L205 (542 aa).

A compositionally biased stretch (basic and acidic residues) spans 20–30; the sequence is FEKKSVGHNSD. Residues 20 to 49 are disordered; that stretch reads FEKKSVGHNSDDEYDDTVPYNEDDETSEEE. The segment covering 31–49 has biased composition (acidic residues); the sequence is DEYDDTVPYNEDDETSEEE. The region spanning 69-538 is the Protein kinase domain; the sequence is YLLLKKIGSG…ADELLKHPWL (470 aa). ATP contacts are provided by residues 75–83 and lysine 98; that span reads IGSGNNASV. The active-site Proton acceptor is the aspartate 201. Residues 278–314 are disordered; that stretch reads EELIPDDPDNNEKYYDSTDSEEYDYSDNSDYYDDDED. Residues 295–314 show a composition bias toward acidic residues; that stretch reads TDSEEYDYSDNSDYYDDDED.

This sequence belongs to the protein kinase superfamily. Ser/Thr protein kinase family.

It catalyses the reaction L-seryl-[protein] + ATP = O-phospho-L-seryl-[protein] + ADP + H(+). It carries out the reaction L-threonyl-[protein] + ATP = O-phospho-L-threonyl-[protein] + ADP + H(+). In Acanthamoeba polyphaga (Amoeba), this protein is Putative serine/threonine-protein kinase L205.